Consider the following 401-residue polypeptide: 8-amino-7-oxononanoate synthase (401 aa).

R19 is a binding site for substrate. 106–107 (GY) contributes to the pyridoxal 5'-phosphate binding site. H131 is a binding site for substrate. Residues S176, H204, and T233 each coordinate pyridoxal 5'-phosphate. At K236 the chain carries N6-(pyridoxal phosphate)lysine. T350 provides a ligand contact to substrate.

It belongs to the class-II pyridoxal-phosphate-dependent aminotransferase family. BioF subfamily. Homodimer. Requires pyridoxal 5'-phosphate as cofactor.

It carries out the reaction 6-carboxyhexanoyl-[ACP] + L-alanine + H(+) = (8S)-8-amino-7-oxononanoate + holo-[ACP] + CO2. Its pathway is cofactor biosynthesis; biotin biosynthesis. Functionally, catalyzes the decarboxylative condensation of pimeloyl-[acyl-carrier protein] and L-alanine to produce 8-amino-7-oxononanoate (AON), [acyl-carrier protein], and carbon dioxide. The polypeptide is 8-amino-7-oxononanoate synthase (Pseudomonas aeruginosa (strain LESB58)).